Consider the following 235-residue polypeptide: Superoxide dismutase [Mn] 3.1, mitochondrial (235 aa).

The N-terminal 31 residues, 1-31, are a transit peptide targeting the mitochondrion; that stretch reads MALRTLASKKVLSFPFGGAGRPLAAAASARG. Mn(2+)-binding residues include H59, H107, D196, and H200.

The protein belongs to the iron/manganese superoxide dismutase family. Homotetramer. Mn(2+) serves as cofactor.

It localises to the mitochondrion matrix. The enzyme catalyses 2 superoxide + 2 H(+) = H2O2 + O2. Functionally, destroys superoxide anion radicals which are normally produced within the cells and which are toxic to biological systems. The protein is Superoxide dismutase [Mn] 3.1, mitochondrial (SODA.4) of Zea mays (Maize).